An 864-amino-acid chain; its full sequence is Alanine--tRNA ligase (864 aa).

H534, H538, C639, and H643 together coordinate Zn(2+).

This sequence belongs to the class-II aminoacyl-tRNA synthetase family. The cofactor is Zn(2+).

Its subcellular location is the cytoplasm. It carries out the reaction tRNA(Ala) + L-alanine + ATP = L-alanyl-tRNA(Ala) + AMP + diphosphate. Its function is as follows. Catalyzes the attachment of alanine to tRNA(Ala) in a two-step reaction: alanine is first activated by ATP to form Ala-AMP and then transferred to the acceptor end of tRNA(Ala). Also edits incorrectly charged Ser-tRNA(Ala) and Gly-tRNA(Ala) via its editing domain. The polypeptide is Alanine--tRNA ligase (Aster yellows witches'-broom phytoplasma (strain AYWB)).